A 206-amino-acid polypeptide reads, in one-letter code: RNA-binding protein (206 aa).

The interval 87–206 is disordered; it reads PRGMQRGNRR…SGAKSKRRPR (120 aa). Over residues 109-132 the composition is skewed to basic and acidic residues; the sequence is MPKDDSNDRKKAKTSKDRKVEKSS.

The protein belongs to the phytoreovirus RNA-binding protein family.

It is found in the host cytoplasm. Its function is as follows. Constituent of viral factories. Binds to ssRNA and dsRNA. This Rice gall dwarf virus (RGDV) protein is RNA-binding protein.